Consider the following 559-residue polypeptide: CCR4-NOT transcription complex subunit 6-like (559 aa).

The tract at residues 1–148 is required for interaction with cnot1, cnot3 and cnot7; it reads MPKEKYDPPD…LYQEPDGTRK (148 aa). The tract at residues 1-550 is nuclease domain; it reads MPKEKYDPPD…NGLHLPVHST (550 aa). LRR repeat units lie at residues 52–73, 75–96, 98–120, and 121–143; these read HLTA…IAKL, HLVY…LGNM, TLRE…GRLF, and QLQT…YQEP. Residue E235 participates in Mg(2+) binding. E235, E271, H353, and P358 together coordinate substrate. D405 lines the Mg(2+) pocket. D405 acts as the Proton donor/acceptor in catalysis. Residues N407, N474, and F479 each coordinate substrate.

This sequence belongs to the CCR4/nocturin family. As to quaternary structure, component of the CCR4-NOT complex. Mg(2+) is required as a cofactor.

The protein localises to the cytoplasm. It localises to the nucleus. It carries out the reaction Exonucleolytic cleavage of poly(A) to 5'-AMP.. In terms of biological role, poly(A) nuclease with 3'-5' RNase activity. Catalytic component of the CCR4-NOT complex which is one of the major cellular mRNA deadenylases and is linked to various cellular processes including bulk mRNA degradation, miRNA-mediated repression, translational repression during translational initiation and general transcription regulation. Additional complex functions may be a consequence of its influence on mRNA expression. This Danio rerio (Zebrafish) protein is CCR4-NOT transcription complex subunit 6-like (cnot6l).